A 409-amino-acid polypeptide reads, in one-letter code: NADH-quinone oxidoreductase subunit D (409 aa).

This sequence belongs to the complex I 49 kDa subunit family. As to quaternary structure, NDH-1 is composed of 14 different subunits. Subunits NuoB, C, D, E, F, and G constitute the peripheral sector of the complex.

Its subcellular location is the cell inner membrane. It catalyses the reaction a quinone + NADH + 5 H(+)(in) = a quinol + NAD(+) + 4 H(+)(out). Functionally, NDH-1 shuttles electrons from NADH, via FMN and iron-sulfur (Fe-S) centers, to quinones in the respiratory chain. The immediate electron acceptor for the enzyme in this species is believed to be ubiquinone. Couples the redox reaction to proton translocation (for every two electrons transferred, four hydrogen ions are translocated across the cytoplasmic membrane), and thus conserves the redox energy in a proton gradient. This is NADH-quinone oxidoreductase subunit D from Campylobacter concisus (strain 13826).